We begin with the raw amino-acid sequence, 319 residues long: Acetyl-coenzyme A carboxylase carboxyl transferase subunit alpha (319 aa).

A CoA carboxyltransferase C-terminal domain is found at 38-292 (ALDKKAADLL…GKAIASMLAG (255 aa)).

The protein belongs to the AccA family. In terms of assembly, acetyl-CoA carboxylase is a heterohexamer composed of biotin carboxyl carrier protein (AccB), biotin carboxylase (AccC) and two subunits each of ACCase subunit alpha (AccA) and ACCase subunit beta (AccD).

The protein resides in the cytoplasm. The catalysed reaction is N(6)-carboxybiotinyl-L-lysyl-[protein] + acetyl-CoA = N(6)-biotinyl-L-lysyl-[protein] + malonyl-CoA. The protein operates within lipid metabolism; malonyl-CoA biosynthesis; malonyl-CoA from acetyl-CoA: step 1/1. In terms of biological role, component of the acetyl coenzyme A carboxylase (ACC) complex. First, biotin carboxylase catalyzes the carboxylation of biotin on its carrier protein (BCCP) and then the CO(2) group is transferred by the carboxyltransferase to acetyl-CoA to form malonyl-CoA. The protein is Acetyl-coenzyme A carboxylase carboxyl transferase subunit alpha of Jannaschia sp. (strain CCS1).